The chain runs to 404 residues: Glucose-1-phosphate adenylyltransferase 2 (404 aa).

Residues Tyr-97, Gly-162, 177–178 (EK), and Ser-195 contribute to the alpha-D-glucose 1-phosphate site.

It belongs to the bacterial/plant glucose-1-phosphate adenylyltransferase family. As to quaternary structure, homotetramer.

It carries out the reaction alpha-D-glucose 1-phosphate + ATP + H(+) = ADP-alpha-D-glucose + diphosphate. It participates in glycan biosynthesis; glycogen biosynthesis. Involved in the biosynthesis of ADP-glucose, a building block required for the elongation reactions to produce glycogen. Catalyzes the reaction between ATP and alpha-D-glucose 1-phosphate (G1P) to produce pyrophosphate and ADP-Glc. This is Glucose-1-phosphate adenylyltransferase 2 from Vibrio parahaemolyticus serotype O3:K6 (strain RIMD 2210633).